The chain runs to 251 residues: MTINTCRETGLHRALKDYFSPRGSRQEVELRGSICDVVHPDGTIVEVQTSGLGRLEAKLKKLLPYHQVMVVYPVSRRLYIRMLNEDGSERHYRKSPKEGSFFQIYREIGRLHDLLDHEHLSLHIVYIHSEVIKVDDRKGRSRYKKPRIVDRKLLEVQSSEEFRNKGSLAQPLLSKLPEIFCCDDLAQTGTGVHCRYALRFLRRNGMATPHSKRGRTKLYRKEPPGDNRSPPPWQEPHGEGLAEKLSPGPAR.

Residues 207-251 form a disordered region; the sequence is ATPHSKRGRTKLYRKEPPGDNRSPPPWQEPHGEGLAEKLSPGPAR.

This is an uncharacterized protein from Treponema pallidum (strain Nichols).